Here is a 94-residue protein sequence, read N- to C-terminus: Putative regulatory protein THA_332 (94 aa).

It belongs to the RemA family.

This is Putative regulatory protein THA_332 from Thermosipho africanus (strain TCF52B).